Reading from the N-terminus, the 501-residue chain is DDB1- and CUL4-associated factor 12-like protein 1 (501 aa).

Over residues 1 to 37 the composition is skewed to polar residues; that stretch reads MRQADSQTQPSPAEQETPQPAGPSNRSPPTMGPQQTG. The tract at residues 1–67 is disordered; that stretch reads MRQADSQTQP…PAAPMATAGE (67 aa). WD repeat units follow at residues 185–225, 230–268, 298–337, and 384–423; these read PPSC…PVCL, GHRD…FNGS, PGNR…SRLL, and SREG…FLEE.

It belongs to the WD repeat DCAF12 family.

This is DDB1- and CUL4-associated factor 12-like protein 1 (Dcaf12l1) from Mus musculus (Mouse).